A 202-amino-acid polypeptide reads, in one-letter code: Syndecan-4 (202 aa).

Residues 1–22 (MASPRLLALLLLLVGAFNAAAA) form the signal peptide. Residues 23–152 (ESIRETEVIN…NIFERTEVLS (130 aa)) lie on the Extracellular side of the membrane. 2 disordered regions span residues 41-75 (YFSG…GPED) and 87-112 (VPLD…ELEE). Ser43 carries an O-linked (Xyl...) (glycosaminoglycan) serine glycan. Over residues 46-63 (LPDDEDVGGPGQEPDDFE) the composition is skewed to acidic residues. Ser65 and Ser67 each carry an O-linked (Xyl...) (glycosaminoglycan) serine glycan. A helical membrane pass occupies residues 153 to 173 (ALIVGGIVGILFAVFLVLLLV). Residues 174–202 (YRMKKKDEGSYDLGKKPIYKKAPTNEFYA) lie on the Cytoplasmic side of the membrane.

It belongs to the syndecan proteoglycan family. In terms of assembly, homodimer. Interacts with CDCP1 and SDCBP. Interacts (via its cytoplasmic domain) with GIPC (via its PDZ domain). Interacts (via its cytoplasmic domain) with NUDT16L1. Interacts with DNM2; this interaction is markedly enhanced at focal ahesion site upon induction of focal adhesions and stress-fiber formation. In terms of processing, shedding, cleavage of the extracellular domain to release a soluble form, is enhanced by a number of factors such as heparanase, growth factor receptor action for example by thrombin or EGF. Physiological events such as stress or wound healing can activate the shedding. PMA-mediated shedding is inhibited by TIMP3. Post-translationally, O-glycosylated; contains both chondroitin sulfate and heparan sulfate. Ser-43, Ser-65 and Ser-67 can all be modified by either chondroitin sulfate or heparan sulfate, and the protein exists in forms that contain only chondroitin sulfate, only heparan sulfate and both chondroitin sulfate and heparan sulfate.

The protein localises to the membrane. Its subcellular location is the secreted. In terms of biological role, cell surface proteoglycan which regulates exosome biogenesis in concert with SDCBP and PDCD6IP. This is Syndecan-4 from Sus scrofa (Pig).